The chain runs to 322 residues: Phosphoenolpyruvate transferase (322 aa).

D58 serves as a coordination point for 7,8-didemethyl-8-hydroxy-5-deazariboflavin.

Belongs to the CofD family. In terms of assembly, homodimer. Requires Mg(2+) as cofactor.

It catalyses the reaction enolpyruvoyl-2-diphospho-5'-guanosine + 7,8-didemethyl-8-hydroxy-5-deazariboflavin = dehydro coenzyme F420-0 + GMP + H(+). The protein operates within cofactor biosynthesis; coenzyme F420 biosynthesis. Functionally, catalyzes the transfer of the phosphoenolpyruvate moiety from enoylpyruvoyl-2-diphospho-5'-guanosine (EPPG) to 7,8-didemethyl-8-hydroxy-5-deazariboflavin (FO) with the formation of dehydro coenzyme F420-0 and GMP. This chain is Phosphoenolpyruvate transferase, found in Thermobifida fusca (strain YX).